A 389-amino-acid polypeptide reads, in one-letter code: 26S proteasome regulatory subunit 10B (389 aa).

An N6-acetyllysine modification is found at Lys-72. ATP is bound at residue 174 to 181; the sequence is GPPGTGKT. Residue Lys-206 is modified to N6-acetyllysine. Residue Ser-244 is modified to Phosphoserine.

This sequence belongs to the AAA ATPase family. Component of the 19S proteasome regulatory particle complex. The 26S proteasome consists of a 20S core particle (CP) and two 19S regulatory subunits (RP). The regulatory particle is made of a lid composed of 9 subunits, a base containing 6 ATPases including PSMC6 and few additional components. Interacts with PAAF1.

It localises to the cytoplasm. The protein localises to the nucleus. Its function is as follows. Component of the 26S proteasome, a multiprotein complex involved in the ATP-dependent degradation of ubiquitinated proteins. This complex plays a key role in the maintenance of protein homeostasis by removing misfolded or damaged proteins, which could impair cellular functions, and by removing proteins whose functions are no longer required. Therefore, the proteasome participates in numerous cellular processes, including cell cycle progression, apoptosis, or DNA damage repair. PSMC6 belongs to the heterohexameric ring of AAA (ATPases associated with diverse cellular activities) proteins that unfolds ubiquitinated target proteins that are concurrently translocated into a proteolytic chamber and degraded into peptides. This chain is 26S proteasome regulatory subunit 10B (PSMC6), found in Bos taurus (Bovine).